The sequence spans 695 residues: Adhesion G protein-coupled receptor F4 (695 aa).

The first 21 residues, 1–21 (MKMKSQATMICCLVFFLSTEC), serve as a signal peptide directing secretion. At 22–406 (SHYRSKIHLK…TDKVLDYITC (385 aa)) the chain is on the extracellular side. Residues Asn61, Asn169, Asn177, Asn209, Asn229, Asn250, Asn257, Asn263, Asn264, Asn286, Asn309, and Asn340 are each glycosylated (N-linked (GlcNAc...) asparagine). The GAIN-B domain maps to 249-397 (HNTSEKSLNF…SILMSSKSMT (149 aa)). 2 disulfides stabilise this stretch: Cys349–Cys376 and Cys364–Cys378. Positions 349 to 397 (CVGWHSKKRRWDEKACQMMLDIRNEVKCRCNYTSVVMSFSILMSSKSMT) are GPS. A glycan (N-linked (GlcNAc...) asparagine) is linked at Asn379. A helical membrane pass occupies residues 407–427 (IGLSVSILSLVLCLIIEATVW). Topologically, residues 428–440 (SRVVVTEISYMRH) are cytoplasmic. The chain crosses the membrane as a helical span at residues 441–461 (VCIVNIAVSLLTANVWFIIGS). Residues 462–485 (HFNIKAQDYNMCVAVTFFSHFFYL) lie on the Extracellular side of the membrane. A helical membrane pass occupies residues 486 to 506 (SLFFWMLFKALLIIYGILVIF). The Cytoplasmic portion of the chain corresponds to 507–515 (RRMMKSRMM). Residues 516–536 (VIGFAIGYGCPLIIAVTTVAI) traverse the membrane as a helical segment. Topologically, residues 537–561 (TEPEKGYMRPEACWLNWDNTKALLA) are extracellular. The chain crosses the membrane as a helical span at residues 562–582 (FAIPAFVIVAVNLIVVLVVAV). Topologically, residues 583 to 606 (NTQRPSIGSSKSQDVVIIMRISKN) are cytoplasmic. Residues 607 to 627 (VAILTPLLGLTWGFGIATLIE) form a helical membrane-spanning segment. The Extracellular portion of the chain corresponds to 628–634 (GTSLTFH). A helical transmembrane segment spans residues 635–655 (IIFALLNAFQGFFILLFGTIM). The Cytoplasmic segment spans residues 656–695 (DHKIRDALRMRMSSLKGKSRAAENASLGPTNGSKLMNRQG). The disordered stretch occupies residues 674–695 (SRAAENASLGPTNGSKLMNRQG). Positions 682 to 695 (LGPTNGSKLMNRQG) are enriched in polar residues.

The protein belongs to the G-protein coupled receptor 2 family. Adhesion G-protein coupled receptor (ADGR) subfamily.

It localises to the membrane. Orphan receptor. The polypeptide is Adhesion G protein-coupled receptor F4 (ADGRF4) (Homo sapiens (Human)).